A 232-amino-acid polypeptide reads, in one-letter code: 5'-methylthioadenosine/S-adenosylhomocysteine nucleosidase (232 aa).

E12 serves as the catalytic Proton acceptor. Substrate is bound by residues G78, I152, and 173-174 (ME). The active-site Proton donor is the D197.

The protein belongs to the PNP/UDP phosphorylase family. MtnN subfamily. As to quaternary structure, homodimer.

The catalysed reaction is S-adenosyl-L-homocysteine + H2O = S-(5-deoxy-D-ribos-5-yl)-L-homocysteine + adenine. It carries out the reaction S-methyl-5'-thioadenosine + H2O = 5-(methylsulfanyl)-D-ribose + adenine. The enzyme catalyses 5'-deoxyadenosine + H2O = 5-deoxy-D-ribose + adenine. It participates in amino-acid biosynthesis; L-methionine biosynthesis via salvage pathway; S-methyl-5-thio-alpha-D-ribose 1-phosphate from S-methyl-5'-thioadenosine (hydrolase route): step 1/2. Functionally, catalyzes the irreversible cleavage of the glycosidic bond in both 5'-methylthioadenosine (MTA) and S-adenosylhomocysteine (SAH/AdoHcy) to adenine and the corresponding thioribose, 5'-methylthioribose and S-ribosylhomocysteine, respectively. Also cleaves 5'-deoxyadenosine, a toxic by-product of radical S-adenosylmethionine (SAM) enzymes, into 5-deoxyribose and adenine. Thus, is required for in vivo function of the radical SAM enzymes biotin synthase and lipoic acid synthase, that are inhibited by 5'-deoxyadenosine accumulation. The sequence is that of 5'-methylthioadenosine/S-adenosylhomocysteine nucleosidase from Salmonella agona (strain SL483).